A 540-amino-acid polypeptide reads, in one-letter code: [Co(II) methylated amine-specific corrinoid protein] reductase (540 aa).

4Fe-4S ferredoxin-type domains are found at residues 471–500 and 504–535; these read IILE…IVER and RIAK…ITKL. [4Fe-4S] cluster is bound by residues C480, C483, C486, C490, C513, C518, C521, and C525.

As to quaternary structure, monomer. Requires [4Fe-4S] cluster as cofactor.

It carries out the reaction 2 Co(II)-[methylamine-specific corrinoid protein] + AH2 + ATP + H2O = 2 Co(I)-[methylamine-specific corrinoid protein] + A + ADP + phosphate + 3 H(+). The enzyme catalyses 2 Co(II)-[dimethylamine-specific corrinoid protein] + AH2 + ATP + H2O = 2 Co(I)-[dimethylamine-specific corrinoid protein] + A + ADP + phosphate + 3 H(+). It catalyses the reaction 2 Co(II)-[trimethylamine-specific corrinoid protein] + AH2 + ATP + H2O = 2 Co(I)-[trimethylamine-specific corrinoid protein] + A + ADP + phosphate + 3 H(+). The protein operates within one-carbon metabolism; methanogenesis from methylamine. Its pathway is one-carbon metabolism; methanogenesis from dimethylamine. It functions in the pathway one-carbon metabolism; methanogenesis from trimethylamine. Its function is as follows. Reductase required for the activation of corrinoid-dependent methylamine methyltransferase reactions during methanogenesis. Mediates the ATP-dependent reduction of corrinoid proteins from the inactive cobalt(II) state to the active cobalt(I) state. Acts on the corrinoid proteins involved in methanogenesis from monomethylamine (MMA), dimethylamine (DMA) and trimethylamine (TMA), namely MtmC, MtbC and MttC, respectively. The polypeptide is [Co(II) methylated amine-specific corrinoid protein] reductase (Methanosarcina barkeri).